Here is a 427-residue protein sequence, read N- to C-terminus: MSILKSFIEVSEDSHFPIQNLPYGVFKPTLNDQARIGVAIGDFVCDLSVLADLKLFDGKLKDTKVFHQENLNSFMSLGKELWSEARKTIQNLLSSETSTIRDNKEYREKIFHSISSVTMLLPARIGDYTDFYASKEHATNVGIMFRGKENALMPNWVHLPVGYHGRSSSIVVSGTPLKRPWGQTKSDEPDSLPTFNPCRLLDFELEMGALIGGESTKLGEPISIESAKDHIFGLVLLNDWSARDIQKWEYVPLGPFLAKNFGSTISPWVVTMEALQPFATKPPTQDPQPMKYLQEQGNTTFDIELSVSIKSPKMSKPHKVSTSNLKYMYWTLTQQLAHHTVNGCNMNAGDLLGTGTISGPTEDSYGSMLELSWKGSKVVSLGTETNEERKFIQDGDSVILSGLCKGNGYQIGFGNCEGTILPADKRQ.

A Ca(2+)-binding site is contributed by Asp-130. Substrate is bound at residue Tyr-132. Residue His-137 is the Proton acceptor of the active site. Arg-146 is a binding site for substrate. 3 residues coordinate Ca(2+): Glu-204, Glu-206, and Asp-239. Asp-239 contributes to the Mg(2+) binding site. The substrate site is built by Gln-246 and Tyr-250. 2 residues coordinate Mg(2+): Lys-259 and Ser-263. Thr-356 contributes to the substrate binding site.

The protein belongs to the FAH family. The cofactor is Ca(2+). Requires Mg(2+) as cofactor.

The enzyme catalyses 4-fumarylacetoacetate + H2O = acetoacetate + fumarate + H(+). The protein operates within amino-acid degradation; L-phenylalanine degradation; acetoacetate and fumarate from L-phenylalanine: step 6/6. This chain is Fumarylacetoacetase (fah), found in Dictyostelium discoideum (Social amoeba).